We begin with the raw amino-acid sequence, 253 residues long: MSFSVHNQKGSKRPLPLEPLLFLQVPRSNYLHFQEEKQRLHLKKFLLDRMFLVAKIQANVERKDVADYYEQMFQSVLKHHLGEAVTGLLLIYPTSILHILESSSDTLYKVLLDYIGHVKDETVFFIQQMKIIVISHNIPMRLFMQWHVSVIKVPVMYLDDVTQSQSLKEVITDFLTQTHKLSLYLCQTMKVGTKGPGDNLHQVAPDLLLPEQIIKYLCKSEEFMDPATFINMYNRPIHITLDSEVVWPAPSRF.

As to expression, testis-specific.

This is Testis-expressed protein 47 from Homo sapiens (Human).